A 180-amino-acid polypeptide reads, in one-letter code: UPF0227 protein YcfP (180 aa).

Belongs to the UPF0227 family.

The polypeptide is UPF0227 protein YcfP (Escherichia coli O139:H28 (strain E24377A / ETEC)).